A 271-amino-acid chain; its full sequence is Formamidopyrimidine-DNA glycosylase (271 aa).

P2 serves as the catalytic Schiff-base intermediate with DNA. The active-site Proton donor is the E3. Residue K58 is the Proton donor; for beta-elimination activity of the active site. Positions 91, 110, and 152 each coordinate DNA. Residues 237-271 (WVYGRAGQSCRQCGELVSKTRQGQRSTFFCARCQH) form an FPG-type zinc finger. Residue R261 is the Proton donor; for delta-elimination activity of the active site.

This sequence belongs to the FPG family. As to quaternary structure, monomer. It depends on Zn(2+) as a cofactor.

The enzyme catalyses Hydrolysis of DNA containing ring-opened 7-methylguanine residues, releasing 2,6-diamino-4-hydroxy-5-(N-methyl)formamidopyrimidine.. It carries out the reaction 2'-deoxyribonucleotide-(2'-deoxyribose 5'-phosphate)-2'-deoxyribonucleotide-DNA = a 3'-end 2'-deoxyribonucleotide-(2,3-dehydro-2,3-deoxyribose 5'-phosphate)-DNA + a 5'-end 5'-phospho-2'-deoxyribonucleoside-DNA + H(+). Involved in base excision repair of DNA damaged by oxidation or by mutagenic agents. Acts as a DNA glycosylase that recognizes and removes damaged bases. Has a preference for oxidized purines, such as 7,8-dihydro-8-oxoguanine (8-oxoG). Has AP (apurinic/apyrimidinic) lyase activity and introduces nicks in the DNA strand. Cleaves the DNA backbone by beta-delta elimination to generate a single-strand break at the site of the removed base with both 3'- and 5'-phosphates. The chain is Formamidopyrimidine-DNA glycosylase from Nitrosomonas europaea (strain ATCC 19718 / CIP 103999 / KCTC 2705 / NBRC 14298).